We begin with the raw amino-acid sequence, 238 residues long: Sugar fermentation stimulation protein homolog (238 aa).

Belongs to the SfsA family.

This chain is Sugar fermentation stimulation protein homolog, found in Alkalilimnicola ehrlichii (strain ATCC BAA-1101 / DSM 17681 / MLHE-1).